Consider the following 319-residue polypeptide: Acetyl-coenzyme A carboxylase carboxyl transferase subunit alpha (319 aa).

A CoA carboxyltransferase C-terminal domain is found at 43 to 296 (LRDKSIELTR…KKQLLFDLSE (254 aa)).

It belongs to the AccA family. In terms of assembly, acetyl-CoA carboxylase is a heterohexamer composed of biotin carboxyl carrier protein (AccB), biotin carboxylase (AccC) and two subunits each of ACCase subunit alpha (AccA) and ACCase subunit beta (AccD).

The protein localises to the cytoplasm. It catalyses the reaction N(6)-carboxybiotinyl-L-lysyl-[protein] + acetyl-CoA = N(6)-biotinyl-L-lysyl-[protein] + malonyl-CoA. The protein operates within lipid metabolism; malonyl-CoA biosynthesis; malonyl-CoA from acetyl-CoA: step 1/1. Functionally, component of the acetyl coenzyme A carboxylase (ACC) complex. First, biotin carboxylase catalyzes the carboxylation of biotin on its carrier protein (BCCP) and then the CO(2) group is transferred by the carboxyltransferase to acetyl-CoA to form malonyl-CoA. This chain is Acetyl-coenzyme A carboxylase carboxyl transferase subunit alpha, found in Baumannia cicadellinicola subsp. Homalodisca coagulata.